The sequence spans 357 residues: tRNA/tmRNA (uracil-C(5))-methyltransferase (357 aa).

Q185, Y212, N217, E233, and D291 together coordinate S-adenosyl-L-methionine. The active-site Nucleophile is the C316. The Proton acceptor role is filled by E350.

Belongs to the class I-like SAM-binding methyltransferase superfamily. RNA M5U methyltransferase family. TrmA subfamily.

It catalyses the reaction uridine(54) in tRNA + S-adenosyl-L-methionine = 5-methyluridine(54) in tRNA + S-adenosyl-L-homocysteine + H(+). It carries out the reaction uridine(341) in tmRNA + S-adenosyl-L-methionine = 5-methyluridine(341) in tmRNA + S-adenosyl-L-homocysteine + H(+). Functionally, dual-specificity methyltransferase that catalyzes the formation of 5-methyluridine at position 54 (m5U54) in all tRNAs, and that of position 341 (m5U341) in tmRNA (transfer-mRNA). The chain is tRNA/tmRNA (uracil-C(5))-methyltransferase from Campylobacter hominis (strain ATCC BAA-381 / DSM 21671 / CCUG 45161 / LMG 19568 / NCTC 13146 / CH001A).